The chain runs to 462 residues: TNF receptor-associated factor family protein DDB_G0267754 (462 aa).

The RING-type; degenerate zinc-finger motif lies at 24-62 (CCVCECLLIEALQCRNGHVACKNCFIKIVKSKKECMTCR). The interval 104–127 (KNGNGNEGSSANEIEQPQQPQQQQ) is disordered. 2 consecutive TRAF-type zinc fingers follow at residues 150-217 (SHLK…SHTE) and 214-273 (SHTE…NQLA). An MATH domain is found at 326 to 449 (MFRGKWVISN…NDTLTINFSI (124 aa)).

This sequence belongs to the TNF receptor-associated factor family. A subfamily.

It localises to the cytoplasm. In terms of biological role, probable adapter protein and signal transducer that links members of the tumor necrosis factor receptor family to different signaling pathways by association with the receptor cytoplasmic domain and kinases. This is TNF receptor-associated factor family protein DDB_G0267754 from Dictyostelium discoideum (Social amoeba).